The chain runs to 453 residues: tRNA modification GTPase MnmE (453 aa).

Residues Arg22, Glu79, and Lys119 each coordinate (6S)-5-formyl-5,6,7,8-tetrahydrofolate. Positions 215 to 376 (GMKVVIAGRP…LQQHLKSLMG (162 aa)) constitute a TrmE-type G domain. Asn225 lines the K(+) pocket. GTP contacts are provided by residues 225–230 (NAGKSS), 244–250 (TEIAGTT), 269–272 (DTAG), and 334–337 (NKAD). Ser229 provides a ligand contact to Mg(2+). The K(+) site is built by Thr244, Ile246, and Thr249. A Mg(2+)-binding site is contributed by Thr250. Residue Lys453 coordinates (6S)-5-formyl-5,6,7,8-tetrahydrofolate.

This sequence belongs to the TRAFAC class TrmE-Era-EngA-EngB-Septin-like GTPase superfamily. TrmE GTPase family. Homodimer. Heterotetramer of two MnmE and two MnmG subunits. K(+) is required as a cofactor.

It localises to the cytoplasm. Its function is as follows. Exhibits a very high intrinsic GTPase hydrolysis rate. Involved in the addition of a carboxymethylaminomethyl (cmnm) group at the wobble position (U34) of certain tRNAs, forming tRNA-cmnm(5)s(2)U34. The sequence is that of tRNA modification GTPase MnmE from Shewanella woodyi (strain ATCC 51908 / MS32).